A 355-amino-acid chain; its full sequence is N6-mAMP deaminase (355 aa).

Zn(2+)-binding residues include histidine 13 and histidine 15. Residues histidine 15, asparagine 17, histidine 65, 97–100 (TTPK), aspartate 160, and glycine 190 each bind N(6)-methyl-AMP. Residue histidine 217 coordinates Zn(2+). Positions 220, 295, and 296 each coordinate N(6)-methyl-AMP. Glutamate 220 acts as the Proton donor in catalysis. A Zn(2+)-binding site is contributed by aspartate 295.

This sequence belongs to the metallo-dependent hydrolases superfamily. Adenosine and AMP deaminases family. As to quaternary structure, monomer. Zn(2+) serves as cofactor.

It localises to the cytoplasm. It is found in the cytosol. It carries out the reaction N(6)-methyl-AMP + H2O + H(+) = IMP + methylamine. Functionally, catalyzes the hydrolysis of the free cytosolic methylated adenosine nucleotide N(6)-methyl-AMP (N6-mAMP) to produce inositol monophosphate (IMP) and methylamine. Is required for the catabolism of cytosolic N6-mAMP, which is derived from the degradation of mRNA containing N6-methylated adenine (m6A). Does not possess deaminase activity toward adenosine, AMP, N6-methyladenosine, or N6-mATP in vitro. The sequence is that of N6-mAMP deaminase from Arabidopsis thaliana (Mouse-ear cress).